The sequence spans 117 residues: Large ribosomal subunit protein uL18 (117 aa).

Belongs to the universal ribosomal protein uL18 family. As to quaternary structure, part of the 50S ribosomal subunit; part of the 5S rRNA/L5/L18/L25 subcomplex. Contacts the 5S and 23S rRNAs.

Its function is as follows. This is one of the proteins that bind and probably mediate the attachment of the 5S RNA into the large ribosomal subunit, where it forms part of the central protuberance. The polypeptide is Large ribosomal subunit protein uL18 (Actinobacillus succinogenes (strain ATCC 55618 / DSM 22257 / CCUG 43843 / 130Z)).